Consider the following 159-residue polypeptide: MQQAPVVLSTLDKLLNWGRSNSLWPLTYGLACCAIEMMATGGSRFDFDRFGTIFRASPRQSDVMIIAGTLTKKHAEFMRRLYDQMPEPKWVISMGSCANTGGMFNTYATVQGADRVVPVDIYLPGCAPRPETLQYALMVLQDKIRRSKAIKQDAPKRLV.

The [4Fe-4S] cluster site is built by cysteine 32, cysteine 33, cysteine 97, and cysteine 126.

It belongs to the complex I 20 kDa subunit family. As to quaternary structure, NDH-1 is composed of 14 different subunits. Subunits NuoB, C, D, E, F, and G constitute the peripheral sector of the complex. It depends on [4Fe-4S] cluster as a cofactor.

It localises to the cell inner membrane. It carries out the reaction a quinone + NADH + 5 H(+)(in) = a quinol + NAD(+) + 4 H(+)(out). In terms of biological role, NDH-1 shuttles electrons from NADH, via FMN and iron-sulfur (Fe-S) centers, to quinones in the respiratory chain. The immediate electron acceptor for the enzyme in this species is believed to be ubiquinone. Couples the redox reaction to proton translocation (for every two electrons transferred, four hydrogen ions are translocated across the cytoplasmic membrane), and thus conserves the redox energy in a proton gradient. In Helicobacter pylori (strain HPAG1), this protein is NADH-quinone oxidoreductase subunit B.